The following is a 291-amino-acid chain: Quinol oxidase subunit 2 (291 aa).

The signal sequence occupies residues 1–28; it reads MQLKKAFWKLASLLPXSLLLFLGGCDKK. The next 2 helical transmembrane spans lie at 49–69 and 91–111; these read SFLL…VILI and LEII…IPTV.

It belongs to the cytochrome c oxidase subunit 2 family.

The protein resides in the cell membrane. It carries out the reaction 2 a quinol + O2 = 2 a quinone + 2 H2O. Its function is as follows. Catalyzes quinol oxidation with the concomitant reduction of oxygen to water. Subunit II transfers the electrons from a quinol to the binuclear center of the catalytic subunit I. This chain is Quinol oxidase subunit 2, found in Bacillus cereus (strain ATCC 10987 / NRS 248).